The primary structure comprises 54 residues: Ovomucoid (54 aa).

Residues Val-4–Cys-54 enclose the Kazal-like domain. Disulfide bonds link Cys-6–Cys-36, Cys-14–Cys-33, and Cys-22–Cys-54. N-linked (GlcNAc...) asparagine glycosylation occurs at Asn-43.

It localises to the secreted. The chain is Ovomucoid from Chroicocephalus ridibundus (Black-headed gull).